A 541-amino-acid polypeptide reads, in one-letter code: Chaperonin GroEL (541 aa).

ATP contacts are provided by residues 30–33 (TLGP), lysine 51, 87–91 (DGTTT), glycine 415, and aspartate 495.

The protein belongs to the chaperonin (HSP60) family. As to quaternary structure, forms a cylinder of 14 subunits composed of two heptameric rings stacked back-to-back. Interacts with the co-chaperonin GroES.

It is found in the cytoplasm. It carries out the reaction ATP + H2O + a folded polypeptide = ADP + phosphate + an unfolded polypeptide.. Together with its co-chaperonin GroES, plays an essential role in assisting protein folding. The GroEL-GroES system forms a nano-cage that allows encapsulation of the non-native substrate proteins and provides a physical environment optimized to promote and accelerate protein folding. The chain is Chaperonin GroEL from Pantoea ananas (Erwinia uredovora).